The primary structure comprises 217 residues: Adr-2-binding protein 1 (217 aa).

The interval 33 to 65 (ARPEPQHDSLKRRNTTSSIAKKKAKMTRGDEQI) is disordered. Over residues 44–58 (RRNTTSSIAKKKAKM) the composition is skewed to basic residues.

Interacts with double-stranded RNA-specific adenosine deaminase adr-2. As to expression, expressed in main body hypodermal cells, the hypodermal seam cells, pharynx, intestine and some neurons.

Its subcellular location is the nucleus. Functionally, required for the A-I editing activity of the double-stranded RNA-specific adenosine deaminase adr-2 by facilitating adr-2 nuclear localization. The chain is Adr-2-binding protein 1 from Caenorhabditis elegans.